Reading from the N-terminus, the 1276-residue chain is Sterol regulatory element-binding protein cleavage-activating protein (1276 aa).

The Cytoplasmic portion of the chain corresponds to 1-18 (MTLTERLREKISQAFYNH). Residues 19–39 (GLLCASYPIPIILFTGLCILA) traverse the membrane as a helical segment. At 40 to 279 (CCYPLLKLPL…NLVHVHFKEE (240 aa)) the chain is on the lumenal side. The tract at residues 46 to 284 (KLPLPGTGPV…HFKEEIGIAE (239 aa)) is loop-1. Residues 60 to 81 (PVKDYSPPPVDSDHKQGEPSEQ) are disordered. N-linked (GlcNAc...) asparagine glycosylation is present at Asn263. Residues 280 to 300 (IGIAELIPLVTTYIILFAYIY) form a helical membrane-spanning segment. In terms of domain architecture, SSD spans 284–442 (ELIPLVTTYI…MFFFTTVLSI (159 aa)). The Cytoplasmic portion of the chain corresponds to 301–312 (FSTRKIDMVKSK). The chain crosses the membrane as a helical span at residues 313–333 (WGLALAAVVTVLSSLLMSVGL). At 334–344 (CTLFGLTPTLN) the chain is on the lumenal side. A helical membrane pass occupies residues 345–365 (GGEIFPYLVVVIGLENVLVLT). Residues 366–401 (KSVVSTPVDLEVKLRIAQGLSSESWSIMKNVATELG) are Cytoplasmic-facing. The chain crosses the membrane as a helical span at residues 402 to 422 (IILIGYFTLVPAIQEFCLFAV). Val423 is a topological domain (lumenal). The chain crosses the membrane as a helical span at residues 424–444 (GLVSDFFLQMFFFTTVLSIDI). At 445–518 (RRMELADLNK…FLARTRLAQR (74 aa)) the chain is on the cytoplasmic side. An ER export signal motif is present at residues 447-452 (MELADL). Glycyl lysine isopeptide (Lys-Gly) (interchain with G-Cter in ubiquitin) cross-links involve residues Lys454 and Lys466. The chain crosses the membrane as a helical span at residues 519 to 539 (LIMAGTVVWIGILVYTDPAGL). The segment at 535–710 (DPAGLRTYLA…QAHGDITLYK (176 aa)) is loop-7. Over 540 to 708 (RTYLAAQVTE…GTQAHGDITL (169 aa)) the chain is Lumenal. 2 N-linked (GlcNAc...) asparagine glycosylation sites follow: Asn590 and Asn641. The helical transmembrane segment at 709-729 (YKVAALGLAAGIVLVLLLLCL) threads the bilayer. At 730 to 1276 (YRVLCPRNYG…YVPSVLEKLD (547 aa)) the chain is on the cytoplasmic side. Residues 731–1276 (RVLCPRNYGQ…YVPSVLEKLD (546 aa)) form an interaction with SREBF2 region. The WD 1 repeat unit spans residues 771-811 (VLRGHLMDIECLASDGMLLVSCCLAGQVCVWDAQTGDCLTR). The disordered stretch occupies residues 816 to 903 (GSRRDSCGGG…RHRAGCGRAR (88 aa)). A phosphoserine mark is found at Ser821, Ser837, Ser843, Ser850, Ser905, and Ser934. The disordered stretch occupies residues 928–957 (PALRPPSPGSPLPQASQEDGAAPEKGSPPL). WD repeat units lie at residues 949–999 (APEK…LCCS) and 1002–1039 (EVSS…SLSP). An Omega-N-methylarginine modification is found at Arg1048. WD repeat units follow at residues 1074–1111 (AHQK…CLFT), 1114–1152 (GHSG…RVSH), 1155–1192 (AHRG…KLYS), and 1194–1232 (QQDL…LLQT).

This sequence belongs to the WD repeat SCAP family. Membrane region forms a homotetramer. Component of the SCAP-SREBP complex (composed of SCAP and SREBF1/SREBP1 or SREBF2/SREBP2); interacts with SREBF1/SREBP1 or SREBF2/SREBP2 through its C-terminal cytoplasmic domain. Forms a ternary complex with INSIG1 or INSIG2 through its transmembrane domains at high sterol concentrations. Interacts with PAQR3; the interaction anchors the SCAP-SREBP complex to the Golgi apparatus in low cholesterol conditions. Interacts with the SEC23-SEC24 complex in a SAR1-GTP-dependent manner through an ER export signal in its third cytoplasmic loop. Interacts with RNF139; the interaction inhibits the interaction of SCAP with SEC24B and hampering the ER to Golgi transport of the SCAP-SREBP complex. Interacts with SPRING. Ubiquitinated at Lys-454 and Lys-466. RNF145 triggers ubiquitination of SCAP, likely inhibiting SCAP-SREBP complex transport to the Golgi apparatus and the subsequent processing/maturation of SREBF2/SREBP2.

The protein resides in the endoplasmic reticulum membrane. It is found in the golgi apparatus membrane. The protein localises to the cytoplasmic vesicle. It localises to the COPII-coated vesicle membrane. Its function is as follows. Escort protein required for cholesterol as well as lipid homeostasis. Regulates export of the SCAP-SREBP complex from the endoplasmic reticulum to the Golgi upon low cholesterol, thereby regulating the processing of sterol regulatory element-binding proteins (SREBPs) SREBF1/SREBP1 and SREBF2/SREBP2. At high sterol concentrations, formation of a ternary complex with INSIG (INSIG1 or INSIG2) leads to mask the ER export signal in SCAP, promoting retention of the complex in the endoplasmic reticulum. Low sterol concentrations trigger release of INSIG, a conformational change in the SSD domain of SCAP, unmasking of the ER export signal, promoting recruitment into COPII-coated vesicles and transport of the SCAP-SREBP to the Golgi: in the Golgi, SREBPs are then processed, releasing the transcription factor fragment of SREBPs from the membrane, its import into the nucleus and up-regulation of LDLR, INSIG1 and the mevalonate pathway. Binds cholesterol via its SSD domain. This Cricetulus griseus (Chinese hamster) protein is Sterol regulatory element-binding protein cleavage-activating protein.